A 119-amino-acid chain; its full sequence is Large ribosomal subunit protein bL20 (119 aa).

This sequence belongs to the bacterial ribosomal protein bL20 family.

Functionally, binds directly to 23S ribosomal RNA and is necessary for the in vitro assembly process of the 50S ribosomal subunit. It is not involved in the protein synthesizing functions of that subunit. The sequence is that of Large ribosomal subunit protein bL20 from Rhodospirillum centenum (strain ATCC 51521 / SW).